Consider the following 560-residue polypeptide: DNA-directed primase/polymerase protein (560 aa).

Residues 1 to 22 adopt a coiled-coil conformation; that stretch reads MNRKWEAKLKQIEERASHYERK. Substrate is bound by residues Arg-76, 114–116, and 165–169; these read DLE and KFSRH. Mn(2+) is bound by residues Asp-114 and Glu-116. Positions 203–223 are disordered; the sequence is EDDDSAPETTGHGFPHFSEAP. Ser-255 bears the Phosphoserine mark. Residues 288-291 and Lys-297 contribute to the substrate site; that span reads RNFR. The Zn(2+) site is built by Cys-419, His-426, Cys-446, and Cys-451. The Zinc knuckle motif motif lies at 419–452; the sequence is CENIGRAHKSNNIMILVDLKNEVWYQKCHDPVCK. The tract at residues 480–507 is disordered; sequence TTDEADETRSNETQNPHKPSPSRLSTGA. The tract at residues 481 to 560 is interaction with RPA1; it reads TDEADETRSN…DELIIEVLQE (80 aa). The segment covering 490 to 507 has biased composition (polar residues); that stretch reads NETQNPHKPSPSRLSTGA. Short sequence motifs (RPA1-binding motif) lie at residues 513 to 527 and 548 to 556; these read WDNGIDDAYFLEATE and EIPDELIIE.

It belongs to the eukaryotic-type primase small subunit family. In terms of assembly, interacts with RPA1; leading to recruitment to chromatin and stimulate DNA primase activity. Interacts with SSBP1. Interacts with POLDIP2; leading to enhance DNA polymerase activity. Requires Mn(2+) as cofactor.

It is found in the nucleus. Its subcellular location is the mitochondrion matrix. The protein localises to the chromosome. The catalysed reaction is ssDNA + n NTP = ssDNA/pppN(pN)n-1 hybrid + (n-1) diphosphate.. The enzyme catalyses DNA(n) + a 2'-deoxyribonucleoside 5'-triphosphate = DNA(n+1) + diphosphate. In terms of biological role, DNA primase and DNA polymerase required to tolerate replication-stalling lesions by bypassing them. Required to facilitate mitochondrial and nuclear replication fork progression by initiating de novo DNA synthesis using dNTPs and acting as an error-prone DNA polymerase able to bypass certain DNA lesions. Shows a high capacity to tolerate DNA damage lesions such as 8oxoG and abasic sites in DNA. Provides different translesion synthesis alternatives when DNA replication is stalled: able to synthesize DNA primers downstream of lesions, such as ultraviolet (UV) lesions, R-loops and G-quadruplexes, to allow DNA replication to continue. Can also realign primers ahead of 'unreadable lesions' such as abasic sites and 6-4 photoproduct (6-4 pyrimidine-pyrimidinone), thereby skipping the lesion. Repriming avoids fork degradation while leading to accumulation of internal ssDNA gaps behind the forks. Also able to incorporate nucleotides opposite DNA lesions such as 8oxoG, like a regular translesion synthesis DNA polymerase. Also required for reinitiating stalled forks after UV damage during nuclear DNA replication. Required for mitochondrial DNA (mtDNA) synthesis and replication, by reinitiating synthesis after UV damage or in the presence of chain-terminating nucleotides. Prevents APOBEC family-mediated DNA mutagenesis by repriming downstream of abasic site to prohibit error-prone translesion synthesis. Has non-overlapping function with POLH. In addition to its role in DNA damage response, also required to maintain efficient nuclear and mitochondrial DNA replication in unperturbed cells. The polypeptide is DNA-directed primase/polymerase protein (Homo sapiens (Human)).